Consider the following 436-residue polypeptide: UPF0597 protein YhaM (436 aa).

The protein belongs to the UPF0597 family.

In Escherichia coli O45:K1 (strain S88 / ExPEC), this protein is UPF0597 protein YhaM.